The following is an 831-amino-acid chain: Cation/H(+) symporter 13 (831 aa).

A run of 12 helical transmembrane segments spans residues Tyr-50–Phe-70, Val-89–Ala-109, Lys-112–Leu-132, Ile-147–Phe-167, Leu-214–Asn-234, Met-250–Thr-270, Val-282–Met-302, Gly-303–Leu-323, Phe-334–Phe-354, Val-364–Ala-384, Leu-397–Trp-417, and Leu-430–Tyr-450.

It belongs to the monovalent cation:proton antiporter 2 (CPA2) transporter (TC 2.A.37) family. CHX (TC 2.A.37.4) subfamily. In terms of tissue distribution, preferentially expressed in pollen before and after germination. Detected in pollen grains within anthers of the flower buds or in pollen on fully open flowers and on the stigma, and in pollen tubes growing in the style. Weakly expressed in roots.

The protein resides in the cell membrane. High-affinity potassium transporter that plays a role in K(+) acquisition. May operate as a K(+)/H(+) symporter. This Arabidopsis thaliana (Mouse-ear cress) protein is Cation/H(+) symporter 13 (CHX13).